The sequence spans 241 residues: ATP synthase subunit a (241 aa).

A run of 7 helical transmembrane segments spans residues 29 to 49 (NSSLFMMISVVSVILFLLLGV), 86 to 106 (IPLVFTVFTFTLSCNLVGMLP), 114 to 134 (HVIVTFALSMIVFTYTTIVGF), 144 to 164 (ILLPEGIPSWLAPMMVFIKLF), 177 to 197 (LAANMIAGHTIIKVVAGFIMN), 200 to 220 (LILTPIPFLFIIALIGFEVFV), and 221 to 241 (AILQAYIFTILTCIYLSDAVK).

Belongs to the ATPase A chain family. As to quaternary structure, F-type ATPases have 2 components, CF(1) - the catalytic core - and CF(0) - the membrane proton channel. CF(1) has five subunits: alpha(3), beta(3), gamma(1), delta(1), epsilon(1). CF(0) has three main subunits: a(1), b(2) and c(9-12). The alpha and beta chains form an alternating ring which encloses part of the gamma chain. CF(1) is attached to CF(0) by a central stalk formed by the gamma and epsilon chains, while a peripheral stalk is formed by the delta and b chains.

The protein localises to the cell membrane. In terms of biological role, key component of the proton channel; it plays a direct role in the translocation of protons across the membrane. The protein is ATP synthase subunit a of Wolbachia sp. subsp. Brugia malayi (strain TRS).